A 247-amino-acid polypeptide reads, in one-letter code: tRNA1(Val) (adenine(37)-N6)-methyltransferase (247 aa).

This sequence belongs to the methyltransferase superfamily. tRNA (adenine-N(6)-)-methyltransferase family.

It is found in the cytoplasm. The enzyme catalyses adenosine(37) in tRNA1(Val) + S-adenosyl-L-methionine = N(6)-methyladenosine(37) in tRNA1(Val) + S-adenosyl-L-homocysteine + H(+). Specifically methylates the adenine in position 37 of tRNA(1)(Val) (anticodon cmo5UAC). The sequence is that of tRNA1(Val) (adenine(37)-N6)-methyltransferase from Edwardsiella ictaluri (strain 93-146).